Reading from the N-terminus, the 33-residue chain is uncharacterized protein (33 aa).

This is an uncharacterized protein from Saccharomyces cerevisiae (strain ATCC 204508 / S288c) (Baker's yeast).